Consider the following 468-residue polypeptide: MRDFMDYIQLAFYDASKWNRDNSYSQLTTTANALLDFSTPERLKVNLSSLSTPHFATTYTLGTVGLIDGSISYLFTTIPLHDTPSRSTLIPLRKLVPGYRQIYPPSLPPAFPAADGRDGDLAIGGTEGDLKKKATLLHATLHLPPPTTLTGSFLRRLSPTTQLSLAFCSSRAPASKSAPQATLVTQILYDTGKYNSEFLFSTDNALFGFKGLWNFGPDPRKQNQNGGDPAREPCRSLLSLLSAGGEVYYSPVSSVVGLSTGLRFTTLPAATENPHSTFPYTLTLTLTPLTGSMSTTYSLLASPNLAFSSRFGFNVYSWESEMVAGCELWRRSKKLHTLQRNSSPLFAVDDLTWARRKMGLQDAAVSVHSERDDLPGIQRYDHDMHHHTQRPHASDSVIKVRVDQSWNIRALWEGRVKELVVSAGIALGPKSRSSLSYASSLAASGPGAAGGLSSYGWKSVGVSVLYSS.

It belongs to the MDM10 family. As to quaternary structure, component of the ER-mitochondria encounter structure (ERMES) or MDM complex, composed of MMM1, MDM10, MDM12 and MDM34. Associates with the mitochondrial outer membrane sorting assembly machinery SAM(core) complex.

The protein resides in the mitochondrion outer membrane. In terms of biological role, component of the ERMES/MDM complex, which serves as a molecular tether to connect the endoplasmic reticulum and mitochondria. Components of this complex are involved in the control of mitochondrial shape and protein biogenesis and may function in phospholipid exchange. MDM10 is involved in the late assembly steps of the general translocase of the mitochondrial outer membrane (TOM complex). Functions in the TOM40-specific route of the assembly of outer membrane beta-barrel proteins, including the association of TOM40 with the receptor TOM22 and small TOM proteins. Can associate with the SAM(core) complex as well as the MDM12-MMM1 complex, both involved in late steps of the major beta-barrel assembly pathway, that is responsible for biogenesis of all outer membrane beta-barrel proteins. May act as a switch that shuttles between both complexes and channels precursor proteins into the TOM40-specific pathway. Plays a role in mitochondrial morphology and in the inheritance of mitochondria. In Blastomyces gilchristii (strain SLH14081) (Blastomyces dermatitidis), this protein is Mitochondrial distribution and morphology protein 10.